The chain runs to 355 residues: Phospho-N-acetylmuramoyl-pentapeptide-transferase (355 aa).

Transmembrane regions (helical) follow at residues 3 to 23, 56 to 76, 80 to 100, 120 to 140, 156 to 176, 185 to 205, 224 to 244, 251 to 271, 276 to 296, and 330 to 350; these read GVLI…PWVI, VIIV…GIGF, GLLV…DDYI, AAVA…AGLL, VGII…SNAV, LAAG…FWQF, PLDV…FLWW, IFMG…IAIV, LLLV…MIQV, and FWIV…AEFL.

This sequence belongs to the glycosyltransferase 4 family. MraY subfamily. It depends on Mg(2+) as a cofactor.

It is found in the cell membrane. The catalysed reaction is UDP-N-acetyl-alpha-D-muramoyl-L-alanyl-gamma-D-glutamyl-meso-2,6-diaminopimeloyl-D-alanyl-D-alanine + di-trans,octa-cis-undecaprenyl phosphate = di-trans,octa-cis-undecaprenyl diphospho-N-acetyl-alpha-D-muramoyl-L-alanyl-D-glutamyl-meso-2,6-diaminopimeloyl-D-alanyl-D-alanine + UMP. Its pathway is cell wall biogenesis; peptidoglycan biosynthesis. Its function is as follows. Catalyzes the initial step of the lipid cycle reactions in the biosynthesis of the cell wall peptidoglycan: transfers peptidoglycan precursor phospho-MurNAc-pentapeptide from UDP-MurNAc-pentapeptide onto the lipid carrier undecaprenyl phosphate, yielding undecaprenyl-pyrophosphoryl-MurNAc-pentapeptide, known as lipid I. This is Phospho-N-acetylmuramoyl-pentapeptide-transferase from Frankia casuarinae (strain DSM 45818 / CECT 9043 / HFP020203 / CcI3).